Consider the following 280-residue polypeptide: UDP-3-O-acyl-N-acetylglucosamine deacetylase (280 aa).

The Zn(2+) site is built by H79, H237, and D241. H264 serves as the catalytic Proton donor.

The protein belongs to the LpxC family. Requires Zn(2+) as cofactor.

It catalyses the reaction a UDP-3-O-[(3R)-3-hydroxyacyl]-N-acetyl-alpha-D-glucosamine + H2O = a UDP-3-O-[(3R)-3-hydroxyacyl]-alpha-D-glucosamine + acetate. It participates in glycolipid biosynthesis; lipid IV(A) biosynthesis; lipid IV(A) from (3R)-3-hydroxytetradecanoyl-[acyl-carrier-protein] and UDP-N-acetyl-alpha-D-glucosamine: step 2/6. Its function is as follows. Catalyzes the hydrolysis of UDP-3-O-myristoyl-N-acetylglucosamine to form UDP-3-O-myristoylglucosamine and acetate, the committed step in lipid A biosynthesis. The polypeptide is UDP-3-O-acyl-N-acetylglucosamine deacetylase (Chlamydia abortus (strain DSM 27085 / S26/3) (Chlamydophila abortus)).